The following is an 868-amino-acid chain: Pentatricopeptide repeat-containing protein At2g27610 (868 aa).

18 PPR repeats span residues 57–91 (DRES…GMEM), 92–126 (DCSI…GFLD), 127–157 (DVSV…MKER), 158–192 (NVVT…GTQP), 193–227 (NSFT…GLDK), 228–258 (TIPV…TEVK), 259–293 (SVVT…YVRL), 294–328 (SESS…GFLF), 329–359 (DQNI…IGCV), 361–395 (NVVS…GVRP), 396–426 (NEFT…NYER), 427–457 (SSTV…IDDK), 458–492 (DIVA…GIKP), 493–528 (NEFT…RLDS), 529–559 (SLCV…QREK), 560–594 (DLVS…KVKM), 595–625 (DGVT…MVRD), and 631–661 (TKEH…MPNP). The tract at residues 666–741 (IWRTILAACR…EPGYSWIEVK (76 aa)) is type E motif. Residues 742 to 772 (NKTYSFLAGDRSHPLKDQIYMKLEDLSTRLK) form a type E(+) motif region. The type DYW motif stretch occupies residues 773-868 (DLGYEPDTSY…DGVCSCGDFW (96 aa)).

This sequence belongs to the PPR family. PCMP-H subfamily.

In Arabidopsis thaliana (Mouse-ear cress), this protein is Pentatricopeptide repeat-containing protein At2g27610 (PCMP-H60).